The sequence spans 311 residues: Malate dehydrogenase (311 aa).

NAD(+) contacts are provided by residues G7–G13 and D34. Substrate is bound by residues R81 and R87. NAD(+) is bound by residues N94 and I117 to N119. 2 residues coordinate substrate: N119 and R153. Residue H177 is the Proton acceptor of the active site. M227 provides a ligand contact to NAD(+).

It belongs to the LDH/MDH superfamily. MDH type 1 family. Homodimer.

It catalyses the reaction (S)-malate + NAD(+) = oxaloacetate + NADH + H(+). Functionally, catalyzes the reversible oxidation of malate to oxaloacetate. This is Malate dehydrogenase from Shewanella putrefaciens (strain CN-32 / ATCC BAA-453).